The following is a 157-amino-acid chain: Ribosome maturation factor RimP (157 aa).

Belongs to the RimP family.

It is found in the cytoplasm. Required for maturation of 30S ribosomal subunits. This Synechococcus sp. (strain CC9311) protein is Ribosome maturation factor RimP.